The chain runs to 230 residues: Probable nicotinate-nucleotide adenylyltransferase (230 aa).

Belongs to the NadD family.

It carries out the reaction nicotinate beta-D-ribonucleotide + ATP + H(+) = deamido-NAD(+) + diphosphate. It participates in cofactor biosynthesis; NAD(+) biosynthesis; deamido-NAD(+) from nicotinate D-ribonucleotide: step 1/1. Catalyzes the reversible adenylation of nicotinate mononucleotide (NaMN) to nicotinic acid adenine dinucleotide (NaAD). This chain is Probable nicotinate-nucleotide adenylyltransferase, found in Pseudomonas putida (strain ATCC 47054 / DSM 6125 / CFBP 8728 / NCIMB 11950 / KT2440).